Consider the following 966-residue polypeptide: MFWKFDLNTTSHVDKLLDKEHVTLQELMDEDDILQECKAQNQKLLDFLCRQQCMEELVSLITQDPPLDMEEKVRFKYPNTACELLTCDVPQISDRLGGDESLLSLLYDFLDHEPPLNPLLASFFSKTIGNLIARKTEQVITFLKKKDKFISLVLKHIGTSALMDLLLRLVSCVEPAGLRQDVLHWLNEEKVIQRLVELIHPSQDEDRQSNASQTLCDIVRLGRDQGSQLQEALEPDPLLTALESQDCVEQLLKNMFDGDRTESCLVSGTQVLLTLLETRRVGTEGLVDSFSQGLERSYAVSSSVLHGIEPRLKDFHQLLLNPPKKKAILTTIGVLEEPLGNARLHGARLMAALLHTNTPSINQELCRLNTMDLLLDLFFKYTWNNFLHFQVELCIAAILSHAAREERTEASGSESRVEPPHENGNRSLETPQPAASLPDNTMVTHLFQKCCLVQRILEAWEANDHTQAAGGMRRGNMGHLTRIANAVVQNLERGPVQTHISEVIRGLPADCRGRWESFVEETLTETNRRNTVDLVSTHHLHSSSEDEDIEGAFPNELSLQQAFSDYQIQQMTANFVDQFGFNDEEFADQDDNINAPFDRIAEINFNIDADEDSPSAALFEACCSDRIQPFDDDEDEDIWEDSDTRCAARVMARPRFGAPHASESCSKNGPERGGQDGKASLEAHRDAPGAGAPPAPGKKEAPPVEGDSEGAMWTAVFDEPANSTPTAPGVVRDVGSSVWAAGTSAPEEKGWAKFTDFQPFCCSESGPRCSSPVDTECSHAEGSRSQGPEKASQASYFAVSPASPCAWNVCVTRKAPLLASDSSSSGGSHSEDGDQKAASAMDAVSRGPGREAPPLPTVARTEEAVGRVGCADSRLLSPACPAPKEVTAAPAVAVPPEATVAITTALSKAGPAIPTPAVSSALAVAVPLGPIMAVTAAPAMVATLGTVTKDGKTDAPPEGAALNGPV.

Ser-289 is modified (phosphoserine). 2 stretches are compositionally biased toward basic and acidic residues: residues 408–424 (TEAS…HENG) and 669–687 (GPER…HRDA). 2 disordered regions span residues 408 to 436 (TEAS…PAAS) and 657 to 707 (GAPH…VEGD). Ser-771 and Ser-828 each carry phosphoserine. The interval 819–856 (ASDSSSSGGSHSEDGDQKAASAMDAVSRGPGREAPPLP) is disordered.

This sequence belongs to the SAPS family. As to quaternary structure, protein phosphatase 6 (PP6) holoenzyme is proposed to be a heterotrimeric complex formed by the catalytic subunit, a SAPS domain-containing subunit (PP6R) and an ankyrin repeat-domain containing regulatory subunit (ARS). Interacts with PPP6C and NFKBIE. Interacts with ANKRD28. Ubiquitously expressed with strongest expression in the testis followed by liver, heart, kidney, brain and placenta.

Its subcellular location is the cytoplasm. Its function is as follows. Regulatory subunit of protein phosphatase 6 (PP6). May function as a scaffolding PP6 subunit. Involved in the PP6-mediated dephosphorylation of NFKBIE opposing its degradation in response to TNF-alpha. The protein is Serine/threonine-protein phosphatase 6 regulatory subunit 2 (PPP6R2) of Homo sapiens (Human).